Consider the following 77-residue polypeptide: U8-lycotoxin-Ls1o (77 aa).

The signal sequence occupies residues 1–20 (MKLMIFTGLVLFAIVSLIEA). Positions 21-26 (QAENGK) are excised as a propeptide.

The protein belongs to the neurotoxin 19 (CSTX) family. 08 (U8-Lctx) subfamily. In terms of processing, contains 4 disulfide bonds. In terms of tissue distribution, expressed by the venom gland.

Its subcellular location is the secreted. The polypeptide is U8-lycotoxin-Ls1o (Lycosa singoriensis (Wolf spider)).